A 514-amino-acid chain; its full sequence is ATP synthase subunit alpha (514 aa).

Position 170 to 177 (G170 to T177) interacts with ATP.

This sequence belongs to the ATPase alpha/beta chains family. As to quaternary structure, F-type ATPases have 2 components, CF(1) - the catalytic core - and CF(0) - the membrane proton channel. CF(1) has five subunits: alpha(3), beta(3), gamma(1), delta(1), epsilon(1). CF(0) has three main subunits: a(1), b(2) and c(9-12). The alpha and beta chains form an alternating ring which encloses part of the gamma chain. CF(1) is attached to CF(0) by a central stalk formed by the gamma and epsilon chains, while a peripheral stalk is formed by the delta and b chains.

The protein resides in the cell inner membrane. It catalyses the reaction ATP + H2O + 4 H(+)(in) = ADP + phosphate + 5 H(+)(out). Produces ATP from ADP in the presence of a proton gradient across the membrane. The alpha chain is a regulatory subunit. The protein is ATP synthase subunit alpha of Pseudomonas fluorescens (strain ATCC BAA-477 / NRRL B-23932 / Pf-5).